Here is a 177-residue protein sequence, read N- to C-terminus: Large ribosomal subunit protein uL6 (177 aa).

Basic and acidic residues predominate over residues P154–R171. Residues P154 to K177 form a disordered region.

Belongs to the universal ribosomal protein uL6 family. In terms of assembly, part of the 50S ribosomal subunit.

Functionally, this protein binds to the 23S rRNA, and is important in its secondary structure. It is located near the subunit interface in the base of the L7/L12 stalk, and near the tRNA binding site of the peptidyltransferase center. In Marinobacter nauticus (strain ATCC 700491 / DSM 11845 / VT8) (Marinobacter aquaeolei), this protein is Large ribosomal subunit protein uL6.